The primary structure comprises 275 residues: Phosphate import ATP-binding protein PstB (275 aa).

Residues Met28–Ile270 form the ABC transporter domain. Gly60–Ser67 serves as a coordination point for ATP.

Belongs to the ABC transporter superfamily. Phosphate importer (TC 3.A.1.7) family. The complex is composed of two ATP-binding proteins (PstB), two transmembrane proteins (PstC and PstA) and a solute-binding protein (PstS).

Its subcellular location is the cell inner membrane. It catalyses the reaction phosphate(out) + ATP + H2O = ADP + 2 phosphate(in) + H(+). Functionally, part of the ABC transporter complex PstSACB involved in phosphate import. Responsible for energy coupling to the transport system. The protein is Phosphate import ATP-binding protein PstB of Novosphingobium aromaticivorans (strain ATCC 700278 / DSM 12444 / CCUG 56034 / CIP 105152 / NBRC 16084 / F199).